Reading from the N-terminus, the 525-residue chain is Putative ribose/galactose/methyl galactoside import ATP-binding protein (525 aa).

The tract at residues 1-30 (MFGSATANPPAQRDLPSSDSDSPTPDAQPP) is disordered. Low complexity predominate over residues 14 to 25 (DLPSSDSDSPTP). 2 consecutive ABC transporter domains span residues 33–269 (LEIS…VGRE) and 279–523 (KPPG…SGHK). ATP is bound at residue 65–72 (GENGAGKS).

This sequence belongs to the ABC transporter superfamily. Carbohydrate importer 2 (CUT2) (TC 3.A.1.2) family.

It localises to the cell inner membrane. The enzyme catalyses D-ribose(out) + ATP + H2O = D-ribose(in) + ADP + phosphate + H(+). The catalysed reaction is D-galactose(out) + ATP + H2O = D-galactose(in) + ADP + phosphate + H(+). Its function is as follows. Part of an ABC transporter complex involved in carbohydrate import. Could be involved in ribose, galactose and/or methyl galactoside import. Responsible for energy coupling to the transport system. This Pseudomonas savastanoi pv. phaseolicola (strain 1448A / Race 6) (Pseudomonas syringae pv. phaseolicola (strain 1448A / Race 6)) protein is Putative ribose/galactose/methyl galactoside import ATP-binding protein.